The primary structure comprises 189 residues: GTPase NRas (189 aa).

GTP contacts are provided by residues 10–18 (GAGGVGKSA) and 29–30 (VD). The short motif at 32–40 (YDPTIEDSY) is the Effector region element. 57-61 (DTAGQ) contributes to the GTP binding site. Serine 89 is modified (phosphoserine). 116-119 (NKCD) provides a ligand contact to GTP. Positions 166–185 (YRMKKLNSSDDGTQGCMGLP) are hypervariable region. Lysine 170 is covalently cross-linked (Glycyl lysine isopeptide (Lys-Gly) (interchain with G-Cter in ubiquitin)). Residue cysteine 181 is the site of S-palmitoyl cysteine attachment. Cysteine 186 is lipidated: S-farnesyl cysteine. The propeptide at 187–189 (VVM) is removed in mature form.

Belongs to the small GTPase superfamily. Ras family. Interacts (active GTP-bound form preferentially) with RGS14. Interacts (active GTP-bound form) with RASSF7. Interacts (active GTP-bound form) with both SHOC2 and PP1c (all isoforms) to form a tertiary complex; SHOC2 and PP1c preferably bind M-Ras/MRAS, but they also bind K-Ras/KRAS, N-Ras/NRAS and H-Ras/HRAS. In terms of processing, palmitoylated by the ZDHHC9-GOLGA7 complex. Depalmitoylated by ABHD17A, ABHD17B and ABHD17C. A continuous cycle of de- and re-palmitoylation regulates rapid exchange between plasma membrane and Golgi. Acetylation at Lys-104 prevents interaction with guanine nucleotide exchange factors (GEFs). Post-translationally, ubiquitinated by the BCR(LZTR1) E3 ubiquitin ligase complex at Lys-170 in a non-degradative manner, leading to inhibit Ras signaling by decreasing Ras association with membranes. In terms of processing, phosphorylation at Ser-89 enhances NRAS association with its downstream effectors.

It is found in the cell membrane. It localises to the golgi apparatus membrane. The catalysed reaction is GTP + H2O = GDP + phosphate + H(+). Its activity is regulated as follows. Alternates between an inactive form bound to GDP and an active form bound to GTP. Activated by a guanine nucleotide-exchange factor (GEF) and inactivated by a GTPase-activating protein (GAP). Its function is as follows. Ras proteins bind GDP/GTP and possess intrinsic GTPase activity. The sequence is that of GTPase NRas (NRAS) from Pongo abelii (Sumatran orangutan).